We begin with the raw amino-acid sequence, 105 residues long: uncharacterized protein (105 aa).

It is found in the plastid. This is an uncharacterized protein from Euglena longa (Euglenophycean alga).